Here is a 235-residue protein sequence, read N- to C-terminus: Large ribosomal subunit protein uL1 (235 aa).

Belongs to the universal ribosomal protein uL1 family. As to quaternary structure, part of the 50S ribosomal subunit.

Binds directly to 23S rRNA. The L1 stalk is quite mobile in the ribosome, and is involved in E site tRNA release. In terms of biological role, protein L1 is also a translational repressor protein, it controls the translation of the L11 operon by binding to its mRNA. The polypeptide is Large ribosomal subunit protein uL1 (Citrobacter koseri (strain ATCC BAA-895 / CDC 4225-83 / SGSC4696)).